Here is a 934-residue protein sequence, read N- to C-terminus: Palmitoyltransferase ZDHHC8 (934 aa).

At 1 to 9 (MPKCDVKTR) the chain is on the cytoplasmic side. Residues 10 to 30 (YIPATFAWIVLLLTTFLFFFY) form a helical membrane-spanning segment. Topologically, residues 31-47 (PCQFYVKSHPWVLAYQG) are extracellular. A helical membrane pass occupies residues 48–68 (VITFFVLANFTLATFMDPGII). Over 69–142 (PKASPDEDCE…NNCIGRRNYR (74 aa)) the chain is Cytoplasmic. The region spanning 99–149 (KWCVTCKFYRPPRCSHCSVCNHCIETFDHHCPWVNNCIGRRNYRFFFFFLV) is the DHHC domain. The active-site S-palmitoyl cysteine intermediate is the cysteine 129. Residues 143 to 163 (FFFFFLVSLSIHMLSIFSLCL) form a helical membrane-spanning segment. Residues 164 to 177 (VYVLKIMPNIKDTA) are Extracellular-facing. A helical membrane pass occupies residues 178 to 198 (PIVAIILMGLVTILAIPIFGL). The Cytoplasmic portion of the chain corresponds to 199–934 (TGFHMVLVSR…IYDMNYEISV (736 aa)). Disordered regions lie at residues 336–440 (NGYN…GYTS), 506–525 (MASPVRRSNPGTPTQPRRPD), 669–705 (QRGVYMWKDTSPGFTNNAGQQQQQQQQAQQVVSSGIG), 751–780 (QQQQQQQQAAAAAAASYHRSNPTSPTTMPQ), 835–862 (PNPMGNQGGGNLQTQPSPQIKRKQTPTR), and 881–934 (LEQQ…EISV). Composition is skewed to polar residues over residues 337-349 (GYNQRSGSTTLYS) and 381-394 (RHNSSSFYLPQVSD). Over residues 397–411 (GLNGSVSTGGGGGGD) the composition is skewed to gly residues. Residues 415–429 (HMRLYHPRHSPHARP) are compositionally biased toward basic residues. Composition is skewed to low complexity over residues 688–705 (QQQQQQQQAQQVVSSGIG) and 751–765 (QQQQQQQQAAAAAAA). Residues 768–780 (HRSNPTSPTTMPQ) are compositionally biased toward polar residues. The span at 910–919 (MQSNASNSGT) shows a compositional bias: polar residues.

It belongs to the DHHC palmitoyltransferase family. ERF2/ZDHHC9 subfamily.

The protein resides in the golgi apparatus membrane. It is found in the cell membrane. The enzyme catalyses L-cysteinyl-[protein] + hexadecanoyl-CoA = S-hexadecanoyl-L-cysteinyl-[protein] + CoA. Palmitoyltransferase that catalyzes the addition of palmitate onto various protein substrates and therefore functions in several unrelated biological processes. Regulates tissue growth possibly by regulating Ras64B protein stability. May regulate CG34450 mRNA levels. This is Palmitoyltransferase ZDHHC8 from Drosophila melanogaster (Fruit fly).